The primary structure comprises 219 residues: 7-carboxy-7-deazaguanine synthase (219 aa).

Substrate is bound by residues 12-14 (IQG) and R27. Residues 18 to 219 (YTGTPSIFIR…VQIHKYLKIR (202 aa)) form the Radical SAM core domain. [4Fe-4S] cluster-binding residues include C31, C35, and C38. T40 is a binding site for Mg(2+). T92 provides a ligand contact to substrate. Residues G94 and 136–138 (SPK) each bind S-adenosyl-L-methionine.

The protein belongs to the radical SAM superfamily. 7-carboxy-7-deazaguanine synthase family. Homodimer. [4Fe-4S] cluster is required as a cofactor. Requires S-adenosyl-L-methionine as cofactor. It depends on Mg(2+) as a cofactor.

It carries out the reaction 6-carboxy-5,6,7,8-tetrahydropterin + H(+) = 7-carboxy-7-deazaguanine + NH4(+). Its pathway is purine metabolism; 7-cyano-7-deazaguanine biosynthesis. Catalyzes the complex heterocyclic radical-mediated conversion of 6-carboxy-5,6,7,8-tetrahydropterin (CPH4) to 7-carboxy-7-deazaguanine (CDG), a step common to the biosynthetic pathways of all 7-deazapurine-containing compounds. The protein is 7-carboxy-7-deazaguanine synthase of Buchnera aphidicola subsp. Schizaphis graminum (strain Sg).